A 204-amino-acid chain; its full sequence is Glycerol-3-phosphate acyltransferase (204 aa).

Helical transmembrane passes span 8 to 28 (NAQF…LLLA), 76 to 96 (GVLV…LWGI), 122 to 142 (MGVM…VWAL), and 166 to 186 (FILH…VLLY).

The protein belongs to the PlsY family. Probably interacts with PlsX.

The protein localises to the cell inner membrane. The catalysed reaction is an acyl phosphate + sn-glycerol 3-phosphate = a 1-acyl-sn-glycero-3-phosphate + phosphate. It participates in lipid metabolism; phospholipid metabolism. In terms of biological role, catalyzes the transfer of an acyl group from acyl-phosphate (acyl-PO(4)) to glycerol-3-phosphate (G3P) to form lysophosphatidic acid (LPA). This enzyme utilizes acyl-phosphate as fatty acyl donor, but not acyl-CoA or acyl-ACP. In Sulfurimonas denitrificans (strain ATCC 33889 / DSM 1251) (Thiomicrospira denitrificans (strain ATCC 33889 / DSM 1251)), this protein is Glycerol-3-phosphate acyltransferase.